The chain runs to 568 residues: Chaperonin homolog Hsp-60, mitochondrial (568 aa).

This sequence belongs to the chaperonin (HSP60) family.

The protein resides in the mitochondrion matrix. Implicated in mitochondrial protein import and macromolecular assembly. May facilitate the correct folding of imported proteins. May also prevent misfolding and promote the refolding and proper assembly of unfolded polypeptides generated under stress conditions in the mitochondrial matrix. The protein is Chaperonin homolog Hsp-60, mitochondrial (hsp-60) of Caenorhabditis elegans.